The sequence spans 579 residues: Isocitrate dehydrogenase kinase/phosphatase (579 aa).

ATP is bound by residues 324 to 330 (ADGTPGM) and Lys-345. Asp-380 is an active-site residue.

Belongs to the AceK family.

It is found in the cytoplasm. It catalyses the reaction L-seryl-[isocitrate dehydrogenase] + ATP = O-phospho-L-seryl-[isocitrate dehydrogenase] + ADP + H(+). Functionally, bifunctional enzyme which can phosphorylate or dephosphorylate isocitrate dehydrogenase (IDH) on a specific serine residue. This is a regulatory mechanism which enables bacteria to bypass the Krebs cycle via the glyoxylate shunt in response to the source of carbon. When bacteria are grown on glucose, IDH is fully active and unphosphorylated, but when grown on acetate or ethanol, the activity of IDH declines drastically concomitant with its phosphorylation. This Xanthomonas axonopodis pv. citri (strain 306) protein is Isocitrate dehydrogenase kinase/phosphatase.